We begin with the raw amino-acid sequence, 416 residues long: Enterobactin exporter EntS (416 aa).

Residues 1–21 (MNKQSWLLNLSLLKTHPAFRA) are Cytoplasmic-facing. The chain crosses the membrane as a helical span at residues 22–42 (VFLARFISIVSLGLLGVAVPV). The Periplasmic portion of the chain corresponds to 43-55 (QIQMMTHSTWQVG). Residues 56-76 (LSVTLTGGAMFVGLMVGGVLA) form a helical membrane-spanning segment. The Cytoplasmic portion of the chain corresponds to 77 to 83 (DRYERKK). The helical transmembrane segment at 84 to 104 (VILLARGTCGIGFIGLCLNAL) threads the bilayer. The Periplasmic segment spans residues 105 to 109 (LPEPS). A helical transmembrane segment spans residues 110-130 (LLAIYLLGLWDGFFASLGVTA). Topologically, residues 131–156 (LLAATPALVGRENLMQAGAITMLTVR) are cytoplasmic. A helical transmembrane segment spans residues 157-177 (LGSVISPMIGGLLLATGGVAW). Asparagine 178 is a topological domain (periplasmic). The helical transmembrane segment at 179–199 (YGLAAAGTFITLLPLLSLPAL) threads the bilayer. At 200–218 (PPPPQPREHPLKSLLAGFR) the chain is on the cytoplasmic side. The chain crosses the membrane as a helical span at residues 219–239 (FLLASPLVGGIALLGGLLTMA). Residues 240–256 (SAVRVLYPALADNWQMS) lie on the Periplasmic side of the membrane. A helical transmembrane segment spans residues 257-277 (AAQIGFLYAAIPLGAAIGALT). Residues 278-287 (SGKLAHSVRP) are Cytoplasmic-facing. A helical transmembrane segment spans residues 288–307 (GLLMLLSTLGAFLAIGLFGL). Residues 308 to 313 (MPMWIL) lie on the Periplasmic side of the membrane. A helical transmembrane segment spans residues 314–336 (GVVCLALFGWLSAVSSLLQYTML). Over 337 to 356 (QTQTPEAMLGRINGLWTAQN) the chain is Cytoplasmic. Residues 357 to 377 (VTGDAIGAALLGGLGAMMTPV) form a helical membrane-spanning segment. Alanine 378 is a topological domain (periplasmic). Residues 379–399 (SASASGFGLLIIGVLLLLVLV) traverse the membrane as a helical segment. The Cytoplasmic segment spans residues 400 to 416 (ELRRFRQTPPQVTASDS).

It belongs to the major facilitator superfamily. EntS (TC 2.A.1.38) family.

It localises to the cell inner membrane. Functionally, component of an export pathway for enterobactin. This is Enterobactin exporter EntS from Escherichia coli O6:H1 (strain CFT073 / ATCC 700928 / UPEC).